The following is a 492-amino-acid chain: GTPase Der (492 aa).

EngA-type G domains follow at residues 3 to 167 and 188 to 363; these read PVVA…PAPE and ICIA…AQYA. GTP contacts are provided by residues 9–16, 56–60, 119–122, 194–201, 241–245, and 306–309; these read GRPNVGKS, DTGGF, NKVE, DTAGI, and NKWD. Residues 364–448 form the KH-like domain; it reads YRINTGLLNR…PIRLLFRAKT (85 aa). Residues 464-492 form a disordered region; the sequence is VEKKEKKTTRRKKERKEQSRRKRVRDLKG. The span at 469-492 shows a compositional bias: basic residues; sequence KKTTRRKKERKEQSRRKRVRDLKG.

Belongs to the TRAFAC class TrmE-Era-EngA-EngB-Septin-like GTPase superfamily. EngA (Der) GTPase family. Associates with the 50S ribosomal subunit.

Its function is as follows. GTPase that plays an essential role in the late steps of ribosome biogenesis. This is GTPase Der from Desulforapulum autotrophicum (strain ATCC 43914 / DSM 3382 / VKM B-1955 / HRM2) (Desulfobacterium autotrophicum).